Here is a 602-residue protein sequence, read N- to C-terminus: ATP-dependent DNA helicase XPD (602 aa).

The Helicase ATP-binding domain maps to Met-1–Leu-247. Residue Ser-11 to Thr-18 participates in ATP binding. Residues Cys-74, Cys-95, Cys-110, and Cys-146 each coordinate [4Fe-4S] cluster. Residues Asp-193 to His-196 carry the DEAH box motif. Positions Val-421–Ala-602 constitute a Helicase C-terminal domain. SsDNA contacts are provided by Trp-531 and Arg-566.

Belongs to the helicase family. RAD3/XPD subfamily. In terms of assembly, monomer. The cofactor is [4Fe-4S] cluster.

The catalysed reaction is Couples ATP hydrolysis with the unwinding of duplex DNA at the replication fork by translocating in the 5'-3' direction. This creates two antiparallel DNA single strands (ssDNA). The leading ssDNA polymer is the template for DNA polymerase III holoenzyme which synthesizes a continuous strand.. The enzyme catalyses ATP + H2O = ADP + phosphate + H(+). ATP-dependent 5'-3' DNA helicase. Thought to be involved in nucleotide excision repair (NER) of DNA. The polypeptide is ATP-dependent DNA helicase XPD (Thermoplasma acidophilum (strain ATCC 25905 / DSM 1728 / JCM 9062 / NBRC 15155 / AMRC-C165)).